Consider the following 1813-residue polypeptide: U3 small nucleolar RNA-associated protein 10 (1813 aa).

HEAT repeat units lie at residues 245-283 (DVLI…KASL), 389-427 (SETI…LQFN), 428-464 (ESDT…DIMP), 584-621 (ADMQ…LASK), and 659-695 (IIHH…QDDS). 2 disordered regions span residues 686–705 (IRGP…STGV) and 887–912 (DLGS…SSMD). Residues 690 to 705 (RSQDDSDRTRSESTGV) show a composition bias toward basic and acidic residues. 7 HEAT repeats span residues 1058-1095 (QTID…AFEH), 1189-1228 (KIAV…KAHG), 1265-1302 (LSLV…SSND), 1309-1347 (ARVL…KYGK), 1398-1437 (EALP…HVPW), 1678-1715 (LASI…LAVA), and 1769-1806 (ALLP…ILGE).

Belongs to the HEATR1/UTP10 family. In terms of assembly, component of the ribosomal small subunit (SSU) processome.

Its subcellular location is the nucleus. The protein localises to the nucleolus. Functionally, involved in nucleolar processing of pre-18S ribosomal RNA. Involved in ribosome biosynthesis. This Coccidioides immitis (strain RS) (Valley fever fungus) protein is U3 small nucleolar RNA-associated protein 10.